A 273-amino-acid chain; its full sequence is Undecaprenyl-diphosphatase (273 aa).

7 helical membrane-spanning segments follow: residues 6-26 (SLLI…LPVS), 45-65 (AKTF…VMFW), 90-110 (LTLI…LLFH), 116-136 (LFNP…LIAA), 190-210 (YAAS…ATAL), 222-242 (GDIP…LIAI), and 252-272 (ISFI…YVVF).

It belongs to the UppP family.

The protein resides in the cell inner membrane. It catalyses the reaction di-trans,octa-cis-undecaprenyl diphosphate + H2O = di-trans,octa-cis-undecaprenyl phosphate + phosphate + H(+). In terms of biological role, catalyzes the dephosphorylation of undecaprenyl diphosphate (UPP). Confers resistance to bacitracin. The sequence is that of Undecaprenyl-diphosphatase from Escherichia coli O139:H28 (strain E24377A / ETEC).